The following is a 223-amino-acid chain: Deoxyribose-phosphate aldolase (223 aa).

Aspartate 91 (proton donor/acceptor) is an active-site residue. Residue lysine 153 is the Schiff-base intermediate with acetaldehyde of the active site. Lysine 182 functions as the Proton donor/acceptor in the catalytic mechanism.

This sequence belongs to the DeoC/FbaB aldolase family. DeoC type 1 subfamily.

The protein localises to the cytoplasm. The catalysed reaction is 2-deoxy-D-ribose 5-phosphate = D-glyceraldehyde 3-phosphate + acetaldehyde. The protein operates within carbohydrate degradation; 2-deoxy-D-ribose 1-phosphate degradation; D-glyceraldehyde 3-phosphate and acetaldehyde from 2-deoxy-alpha-D-ribose 1-phosphate: step 2/2. Functionally, catalyzes a reversible aldol reaction between acetaldehyde and D-glyceraldehyde 3-phosphate to generate 2-deoxy-D-ribose 5-phosphate. This Streptococcus agalactiae serotype V (strain ATCC BAA-611 / 2603 V/R) protein is Deoxyribose-phosphate aldolase.